We begin with the raw amino-acid sequence, 172 residues long: Ribosome maturation factor RimP (172 aa).

This sequence belongs to the RimP family.

It localises to the cytoplasm. Its function is as follows. Required for maturation of 30S ribosomal subunits. This is Ribosome maturation factor RimP from Chlorobium phaeovibrioides (strain DSM 265 / 1930) (Prosthecochloris vibrioformis (strain DSM 265)).